The chain runs to 188 residues: MAASIFTGAVRAASGIFRPLNVLASSTYRNCARNACLNSSLCTIHFRHIQTSVVSSAPRLVTSVGHLAYGHTTTVLNRVATLVPSVLKPPVRALTYCSTRKGKRKTVKSVVHRFLRLHSGLWLRRKAGYKKKLWKKSTARKKRLREFVFCSKTQSKLLDKMTTSFWKRRNWYAGDPYQMYHDRTNLRV.

The protein belongs to the bacterial ribosomal protein bL35 family.

Its subcellular location is the mitochondrion. The protein is Large ribosomal subunit protein bL35m (Mrpl35) of Mus musculus (Mouse).